The following is a 347-amino-acid chain: Ferrochelatase (347 aa).

Residue cysteine 158 participates in [2Fe-2S] cluster binding. Fe cation contacts are provided by histidine 193 and glutamate 272. Residues cysteine 332, cysteine 339, and cysteine 341 each contribute to the [2Fe-2S] cluster site.

Belongs to the ferrochelatase family. Homodimer. [2Fe-2S] cluster serves as cofactor.

The protein resides in the cytoplasm. The enzyme catalyses heme b + 2 H(+) = protoporphyrin IX + Fe(2+). Its pathway is porphyrin-containing compound metabolism; protoheme biosynthesis; protoheme from protoporphyrin-IX: step 1/1. Catalyzes the ferrous insertion into protoporphyrin IX. This is Ferrochelatase from Caulobacter vibrioides (strain ATCC 19089 / CIP 103742 / CB 15) (Caulobacter crescentus).